Reading from the N-terminus, the 597-residue chain is Histidine protein kinase DivJ (597 aa).

Transmembrane regions (helical) follow at residues 40-57 (LGWL…LFTA), 62-81 (WPVW…SLIF), 91-109 (WLLV…LTGG), 110-125 (VGGA…VAAA), 137-158 (GAAL…GLAP), and 159-188 (AAPT…LLIG). One can recognise a Histidine kinase domain in the interval 335 to 553 (NMSHELRTPL…TVSVRLPVLL (219 aa)). H338 is subject to Phosphohistidine; by autocatalysis. Over residues 561–585 (PTPPAAPEAPSAPEPAPTVEEPPPA) the composition is skewed to pro residues. Residues 561-597 (PTPPAAPEAPSAPEPAPTVEEPPPASLGDNVIAFAPR) are disordered.

Its subcellular location is the cell membrane. The catalysed reaction is ATP + protein L-histidine = ADP + protein N-phospho-L-histidine.. Kinase required for the regulation of cell division and differentiation. Is part of a signal transduction pathway, activating PleD by phosphorylation. This chain is Histidine protein kinase DivJ (divJ), found in Caulobacter vibrioides (strain ATCC 19089 / CIP 103742 / CB 15) (Caulobacter crescentus).